The sequence spans 659 residues: Threonine--tRNA ligase (659 aa).

One can recognise a TGS domain in the interval 7 to 70; it reads VQATVTVTFP…TDDATVEIIT (64 aa). The interval 255-557 is catalytic; it reads DHRKLGAELE…LIEHTAGNFP (303 aa). Cysteine 353, histidine 404, and histidine 534 together coordinate Zn(2+).

The protein belongs to the class-II aminoacyl-tRNA synthetase family. In terms of assembly, homodimer. Zn(2+) serves as cofactor.

It is found in the cytoplasm. It catalyses the reaction tRNA(Thr) + L-threonine + ATP = L-threonyl-tRNA(Thr) + AMP + diphosphate + H(+). Its function is as follows. Catalyzes the attachment of threonine to tRNA(Thr) in a two-step reaction: L-threonine is first activated by ATP to form Thr-AMP and then transferred to the acceptor end of tRNA(Thr). Also edits incorrectly charged L-seryl-tRNA(Thr). This chain is Threonine--tRNA ligase, found in Chlorobium phaeobacteroides (strain BS1).